Reading from the N-terminus, the 118-residue chain is NADPH-dependent 7-cyano-7-deazaguanine reductase (118 aa).

C31 serves as the catalytic Thioimide intermediate. The active-site Proton donor is D38. Substrate contacts are provided by residues 53–55 (VEL) and 72–73 (YE).

Belongs to the GTP cyclohydrolase I family. QueF type 1 subfamily.

The protein resides in the cytoplasm. It catalyses the reaction 7-aminomethyl-7-carbaguanine + 2 NADP(+) = 7-cyano-7-deazaguanine + 2 NADPH + 3 H(+). Its pathway is tRNA modification; tRNA-queuosine biosynthesis. Catalyzes the NADPH-dependent reduction of 7-cyano-7-deazaguanine (preQ0) to 7-aminomethyl-7-deazaguanine (preQ1). This Chlorobium phaeobacteroides (strain BS1) protein is NADPH-dependent 7-cyano-7-deazaguanine reductase.